We begin with the raw amino-acid sequence, 176 residues long: Inner membrane-spanning protein YciB (176 aa).

Transmembrane regions (helical) follow at residues 3–23 (FLFD…WGIF), 24–44 (TATA…AFRH), 49–69 (TMLW…LVLH), 81–101 (LYWL…NNLI), 119–139 (LNVA…YVVH), and 149–169 (FKLF…SLWL).

This sequence belongs to the YciB family.

The protein localises to the cell inner membrane. Plays a role in cell envelope biogenesis, maintenance of cell envelope integrity and membrane homeostasis. The sequence is that of Inner membrane-spanning protein YciB from Burkholderia ambifaria (strain MC40-6).